Reading from the N-terminus, the 465-residue chain is MEPSSLELPADTVQRIAAELKCHPTDERVALHLDEEDKLRHFRECFYIPKIQDLPPVDLSLVNKDENAIYFLGNSLGLQPKMVKTYLEEELDKWAKIAAYGHEVGKRPWITGDESIVGLMKDIVGANEKEIALMNALTVNLHLLMLSFFKPTPKRYKILLEAKAFPSDHYAIESQLQLHGLNIEESMRMIKPREGEETLRIEDILEVIEKEGDSIAVILFSGVHFYTGQHFNIPAITKAGQAKGCYVGFDLAHAVGNVELYLHDWGVDFACWCSYKYLNAGAGGIAGAFIHEKHAHTIKPALVGWFGHELSTRFKMDNKLQLIPGVCGFRISNPPILLVCSLHASLEIFKQATMKALRKKSVLLTGYLEYLIKHNYGKDKAATKKPVVNIITPSHVEERGCQLTITFSVPNKDVFQELEKRGVVCDKRNPNGIRVAPVPLYNSFHDVYKFTNLLTSILDSAETKN.

Position 1 is an N-acetylmethionine (M1). Pyridoxal 5'-phosphate-binding positions include L137, T138, 165-168 (FPSD), S221, D250, H253, and Y275. Residue K276 is modified to N6-(pyridoxal phosphate)lysine. Pyridoxal 5'-phosphate is bound by residues W305 and N333.

The protein belongs to the kynureninase family. Homodimer. It depends on pyridoxal 5'-phosphate as a cofactor. As to expression, expressed in all tissues tested (heart, brain placenta, lung, liver, skeletal muscle, kidney and pancreas). Highest levels found in placenta, liver and lung. Expressed in all brain regions.

Its subcellular location is the cytoplasm. It localises to the cytosol. It carries out the reaction L-kynurenine + H2O = anthranilate + L-alanine + H(+). It catalyses the reaction 3-hydroxy-L-kynurenine + H2O = 3-hydroxyanthranilate + L-alanine + H(+). Its pathway is amino-acid degradation; L-kynurenine degradation; L-alanine and anthranilate from L-kynurenine: step 1/1. It participates in cofactor biosynthesis; NAD(+) biosynthesis; quinolinate from L-kynurenine: step 2/3. Its activity is regulated as follows. Inhibited by o-methoxybenzoylalanine (OMBA). Catalyzes the cleavage of L-kynurenine (L-Kyn) and L-3-hydroxykynurenine (L-3OHKyn) into anthranilic acid (AA) and 3-hydroxyanthranilic acid (3-OHAA), respectively. Has a preference for the L-3-hydroxy form. Also has cysteine-conjugate-beta-lyase activity. This is Kynureninase from Homo sapiens (Human).